The sequence spans 1040 residues: Multidrug resistance protein MdtB (1040 aa).

12 helical membrane passes run 16 to 36 (FIMR…AGII), 342 to 362 (DTQF…YLFL), 369 to 389 (IIPG…MVFL), 396 to 416 (LTLM…IVVI), 440 to 460 (IGFT…PLLF), 472 to 492 (FAVT…TLTP), 537 to 557 (WLTL…WVFI), 863 to 883 (LGST…VLGV), 888 to 908 (FIHP…ALLA), 911 to 931 (LAGS…IGIV), 968 to 988 (ILMT…STGV), and 998 to 1018 (IGMV…TPVI).

The protein belongs to the resistance-nodulation-cell division (RND) (TC 2.A.6) family. MdtB subfamily. As to quaternary structure, part of a tripartite efflux system composed of MdtA, MdtB and MdtC. MdtB forms a heteromultimer with MdtC.

The protein localises to the cell inner membrane. This is Multidrug resistance protein MdtB from Klebsiella pneumoniae (strain 342).